We begin with the raw amino-acid sequence, 210 residues long: uncharacterized protein (210 aa).

It to E.coli YkgK.

This is an uncharacterized protein from Escherichia coli (strain K12).